Consider the following 403-residue polypeptide: O-succinylhomoserine sulfhydrylase (403 aa).

Position 219 is an N6-(pyridoxal phosphate)lysine (K219).

This sequence belongs to the trans-sulfuration enzymes family. MetZ subfamily. Homotetramer. Pyridoxal 5'-phosphate is required as a cofactor.

It catalyses the reaction O-succinyl-L-homoserine + hydrogen sulfide = L-homocysteine + succinate. Its pathway is amino-acid biosynthesis; L-methionine biosynthesis via de novo pathway; L-homocysteine from O-succinyl-L-homoserine: step 1/1. In terms of biological role, catalyzes the formation of L-homocysteine from O-succinyl-L-homoserine (OSHS) and hydrogen sulfide. Cannot use the other activated form of L-homoserine, O-acetyl-L-homoserine, as a substrate. In Pseudomonas aeruginosa (strain ATCC 15692 / DSM 22644 / CIP 104116 / JCM 14847 / LMG 12228 / 1C / PRS 101 / PAO1), this protein is O-succinylhomoserine sulfhydrylase.